The chain runs to 340 residues: Replication factor C subunit 5 (340 aa).

Met1 carries the N-acetylmethionine modification. 60–67 (GPPGTGKT) is a binding site for ATP.

It belongs to the activator 1 small subunits family. Subunit of the RFC complex, an heteropentameric complex consisting of a large subunit RFC1 and four small subunits RFC2, RFC3, RFC4 and RFC5; the RFC complex interacts with PCNA. Forms an heterotetrameric complex with RFC2, RFC3 and RFC4; this complex has ATPase activity but is not stimulated by PCNA. The heterotetramer of subunits RFC2, RFC3, RFC4 and RFC5 interacts with RAD17.

It localises to the nucleus. In terms of biological role, subunit of the replication factor C (RFC) complex which acts during elongation of primed DNA templates by DNA polymerases delta and epsilon, and is necessary for ATP-dependent loading of proliferating cell nuclear antigen (PCNA) onto primed DNA. The protein is Replication factor C subunit 5 (RFC5) of Homo sapiens (Human).